Reading from the N-terminus, the 216-residue chain is Serine acetyltransferase (216 aa).

It belongs to the transferase hexapeptide repeat family.

The protein resides in the cytoplasm. The enzyme catalyses L-serine + acetyl-CoA = O-acetyl-L-serine + CoA. It functions in the pathway amino-acid biosynthesis; L-cysteine biosynthesis; L-cysteine from L-serine: step 1/2. The protein is Serine acetyltransferase (cysE) of Staphylococcus xylosus.